The primary structure comprises 345 residues: NADH-quinone oxidoreductase subunit H (345 aa).

Transmembrane regions (helical) follow at residues 13–33 (VLIL…LLFL), 84–104 (FMLA…VIPF), 115–135 (VAIL…IMGG), 161–181 (LGLI…GGIV), 190–210 (FFSW…ISCL), 248–268 (YIAI…GWLS), 277–297 (VFWM…VKAI), and 309–329 (LGWK…AFAA).

The protein belongs to the complex I subunit 1 family. As to quaternary structure, NDH-1 is composed of 14 different subunits. Subunits NuoA, H, J, K, L, M, N constitute the membrane sector of the complex.

The protein resides in the cell inner membrane. It catalyses the reaction a quinone + NADH + 5 H(+)(in) = a quinol + NAD(+) + 4 H(+)(out). Its function is as follows. NDH-1 shuttles electrons from NADH, via FMN and iron-sulfur (Fe-S) centers, to quinones in the respiratory chain. The immediate electron acceptor for the enzyme in this species is believed to be ubiquinone. Couples the redox reaction to proton translocation (for every two electrons transferred, four hydrogen ions are translocated across the cytoplasmic membrane), and thus conserves the redox energy in a proton gradient. This subunit may bind ubiquinone. The sequence is that of NADH-quinone oxidoreductase subunit H from Roseobacter denitrificans (strain ATCC 33942 / OCh 114) (Erythrobacter sp. (strain OCh 114)).